The following is a 227-amino-acid chain: DNA repair protein RecO (227 aa).

Belongs to the RecO family.

Its function is as follows. Involved in DNA repair and RecF pathway recombination. The chain is DNA repair protein RecO from Pseudomonas syringae pv. syringae (strain B728a).